The sequence spans 301 residues: NAD kinase (301 aa).

Asp-73 acts as the Proton acceptor in catalysis. Residues 73–74, 160–161, Arg-188, Asp-190, Ala-198, 201–206, Ala-225, and Gln-257 contribute to the NAD(+) site; these read DG, NE, and TAYNIS.

It belongs to the NAD kinase family. The cofactor is a divalent metal cation.

It localises to the cytoplasm. It carries out the reaction NAD(+) + ATP = ADP + NADP(+) + H(+). In terms of biological role, involved in the regulation of the intracellular balance of NAD and NADP, and is a key enzyme in the biosynthesis of NADP. Catalyzes specifically the phosphorylation on 2'-hydroxyl of the adenosine moiety of NAD to yield NADP. The sequence is that of NAD kinase from Helicobacter hepaticus (strain ATCC 51449 / 3B1).